We begin with the raw amino-acid sequence, 65 residues long: MPKMKSHSGAKKRFKKTGNGKIKRKKANKGHLLTKKNAKRKRQLRKSVVVDDKANRDRIKRMLST.

The span at 1-45 shows a compositional bias: basic residues; the sequence is MPKMKSHSGAKKRFKKTGNGKIKRKKANKGHLLTKKNAKRKRQLR. A disordered region spans residues 1–65; that stretch reads MPKMKSHSGA…RDRIKRMLST (65 aa). Residues 48 to 57 are compositionally biased toward basic and acidic residues; the sequence is VVVDDKANRD.

Belongs to the bacterial ribosomal protein bL35 family.

This Salinibacter ruber (strain DSM 13855 / M31) protein is Large ribosomal subunit protein bL35.